Reading from the N-terminus, the 299-residue chain is Bifunctional protein FolD (299 aa).

NADP(+)-binding positions include 168-170 (GRS), S193, and I234.

Belongs to the tetrahydrofolate dehydrogenase/cyclohydrolase family. In terms of assembly, homodimer.

It carries out the reaction (6R)-5,10-methylene-5,6,7,8-tetrahydrofolate + NADP(+) = (6R)-5,10-methenyltetrahydrofolate + NADPH. The catalysed reaction is (6R)-5,10-methenyltetrahydrofolate + H2O = (6R)-10-formyltetrahydrofolate + H(+). The protein operates within one-carbon metabolism; tetrahydrofolate interconversion. In terms of biological role, catalyzes the oxidation of 5,10-methylenetetrahydrofolate to 5,10-methenyltetrahydrofolate and then the hydrolysis of 5,10-methenyltetrahydrofolate to 10-formyltetrahydrofolate. The chain is Bifunctional protein FolD from Rhizobium johnstonii (strain DSM 114642 / LMG 32736 / 3841) (Rhizobium leguminosarum bv. viciae).